The primary structure comprises 279 residues: Probable phosphatase phospho1 (279 aa).

The active-site Nucleophile is the D41. Residues D41 and D43 each contribute to the Mg(2+) site. The Proton donor role is filled by D43. Residues D52 and D133 each coordinate substrate. A Mg(2+)-binding site is contributed by D215.

It belongs to the HAD-like hydrolase superfamily. PHOSPHO family. Mg(2+) is required as a cofactor.

The protein resides in the extracellular vesicle. The enzyme catalyses phosphoethanolamine + H2O = ethanolamine + phosphate. The catalysed reaction is phosphocholine + H2O = choline + phosphate. Phosphatase that has a high activity toward phosphoethanolamine (PEA) and phosphocholine (PCho). Involved in the generation of inorganic phosphate for bone mineralization. The sequence is that of Probable phosphatase phospho1 (phospho1) from Danio rerio (Zebrafish).